Here is a 314-residue protein sequence, read N- to C-terminus: MEKWMNLRDEDLTEETKTLISSLSSEKGYLGRNLCKYQGSWYYYNFLQGVLNFQRGFKPQDTDIIVASYPKSGTLWLKALTVALFERTKNPSHDDPMSHPLLSNNPHNLLSSSSPRLFSTHTPFHTLQVAVKDSPCKVVYICRDAKDSLVSRWHIVCRSLNKEEDRTILESMFESFCSGVCLFGPFWDHILSYWKASLEKPKQVLFMRYDEIKTDPHGQLKKLAEFLGCPFSKEEEKNGSLNKILEMCSLPNLSSLEVNKTGKSINGIEYKNHFRKGIVGDWKNHLTPEMGSKIDMIMKEKLKDYSEVWFENAL.

Position 71–76 (71–76 (KSGTLW)) interacts with 3'-phosphoadenylyl sulfate. The active-site Proton acceptor is His121. 3'-phosphoadenylyl sulfate contacts are provided by residues Arg143, Ser151, Tyr209, and 275-277 (RKG).

The protein belongs to the sulfotransferase 1 family.

It is found in the cytoplasm. Its function is as follows. Sulfotransferase that utilizes 3'-phospho-5'-adenylyl sulfate (PAPS) as sulfonate donor. This is Cytosolic sulfotransferase 3 (SOT3) from Arabidopsis thaliana (Mouse-ear cress).